The sequence spans 293 residues: 4-hydroxy-tetrahydrodipicolinate synthase (293 aa).

Residue T46 participates in pyruvate binding. Y134 functions as the Proton donor/acceptor in the catalytic mechanism. K162 acts as the Schiff-base intermediate with substrate in catalysis. Position 204 (I204) interacts with pyruvate.

The protein belongs to the DapA family. Homotetramer; dimer of dimers.

Its subcellular location is the cytoplasm. The enzyme catalyses L-aspartate 4-semialdehyde + pyruvate = (2S,4S)-4-hydroxy-2,3,4,5-tetrahydrodipicolinate + H2O + H(+). It participates in amino-acid biosynthesis; L-lysine biosynthesis via DAP pathway; (S)-tetrahydrodipicolinate from L-aspartate: step 3/4. In terms of biological role, catalyzes the condensation of (S)-aspartate-beta-semialdehyde [(S)-ASA] and pyruvate to 4-hydroxy-tetrahydrodipicolinate (HTPA). The sequence is that of 4-hydroxy-tetrahydrodipicolinate synthase from Bdellovibrio bacteriovorus (strain ATCC 15356 / DSM 50701 / NCIMB 9529 / HD100).